We begin with the raw amino-acid sequence, 148 residues long: Deoxyuridine 5'-triphosphate nucleotidohydrolase (148 aa).

Substrate is bound by residues 67–69 (RSG), Asn80, 84–86 (LID), and Met94.

The protein belongs to the dUTPase family. Mg(2+) serves as cofactor.

It carries out the reaction dUTP + H2O = dUMP + diphosphate + H(+). Its pathway is pyrimidine metabolism; dUMP biosynthesis; dUMP from dCTP (dUTP route): step 2/2. This enzyme is involved in nucleotide metabolism: it produces dUMP, the immediate precursor of thymidine nucleotides and it decreases the intracellular concentration of dUTP so that uracil cannot be incorporated into DNA. This chain is Deoxyuridine 5'-triphosphate nucleotidohydrolase, found in Burkholderia multivorans (strain ATCC 17616 / 249).